The sequence spans 427 residues: Adenylosuccinate synthetase (427 aa).

Residues 12 to 18 (GDEGKGK) and 40 to 42 (GHT) each bind GTP. Residue D13 is the Proton acceptor of the active site. Residues D13 and G40 each coordinate Mg(2+). Residues 13 to 16 (DEGK), 38 to 41 (NAGH), T126, R140, Q221, T236, and R299 contribute to the IMP site. H41 serves as the catalytic Proton donor. 295-301 (STTKRPR) serves as a coordination point for substrate. GTP contacts are provided by residues R301, 327–329 (KLD), and 409–411 (SVG).

It belongs to the adenylosuccinate synthetase family. In terms of assembly, homodimer. The cofactor is Mg(2+).

It localises to the cytoplasm. The catalysed reaction is IMP + L-aspartate + GTP = N(6)-(1,2-dicarboxyethyl)-AMP + GDP + phosphate + 2 H(+). The protein operates within purine metabolism; AMP biosynthesis via de novo pathway; AMP from IMP: step 1/2. Its function is as follows. Plays an important role in the de novo pathway of purine nucleotide biosynthesis. Catalyzes the first committed step in the biosynthesis of AMP from IMP. The polypeptide is Adenylosuccinate synthetase (Borrelia duttonii (strain Ly)).